The following is a 362-amino-acid chain: tRNA/tmRNA (uracil-C(5))-methyltransferase (362 aa).

Residues Gln-182, Tyr-210, Asn-215, Glu-231, and Asp-293 each contribute to the S-adenosyl-L-methionine site. The active-site Nucleophile is Cys-318. The Proton acceptor role is filled by Glu-352.

It belongs to the class I-like SAM-binding methyltransferase superfamily. RNA M5U methyltransferase family. TrmA subfamily.

The enzyme catalyses uridine(54) in tRNA + S-adenosyl-L-methionine = 5-methyluridine(54) in tRNA + S-adenosyl-L-homocysteine + H(+). The catalysed reaction is uridine(341) in tmRNA + S-adenosyl-L-methionine = 5-methyluridine(341) in tmRNA + S-adenosyl-L-homocysteine + H(+). Functionally, dual-specificity methyltransferase that catalyzes the formation of 5-methyluridine at position 54 (m5U54) in all tRNAs, and that of position 341 (m5U341) in tmRNA (transfer-mRNA). The sequence is that of tRNA/tmRNA (uracil-C(5))-methyltransferase from Neisseria gonorrhoeae (strain ATCC 700825 / FA 1090).